The following is a 269-amino-acid chain: 5'-nucleotidase SurE (269 aa).

Residues Asp-11, Asp-12, Ser-43, and Asn-101 each coordinate a divalent metal cation.

Belongs to the SurE nucleotidase family. A divalent metal cation is required as a cofactor.

It is found in the cytoplasm. The catalysed reaction is a ribonucleoside 5'-phosphate + H2O = a ribonucleoside + phosphate. Its function is as follows. Nucleotidase that shows phosphatase activity on nucleoside 5'-monophosphates. In Prochlorococcus marinus (strain MIT 9211), this protein is 5'-nucleotidase SurE.